We begin with the raw amino-acid sequence, 94 residues long: Pyrimidine/purine nucleoside phosphorylase (94 aa).

The protein belongs to the nucleoside phosphorylase PpnP family.

The enzyme catalyses a purine D-ribonucleoside + phosphate = a purine nucleobase + alpha-D-ribose 1-phosphate. The catalysed reaction is adenosine + phosphate = alpha-D-ribose 1-phosphate + adenine. It catalyses the reaction cytidine + phosphate = cytosine + alpha-D-ribose 1-phosphate. It carries out the reaction guanosine + phosphate = alpha-D-ribose 1-phosphate + guanine. The enzyme catalyses inosine + phosphate = alpha-D-ribose 1-phosphate + hypoxanthine. The catalysed reaction is thymidine + phosphate = 2-deoxy-alpha-D-ribose 1-phosphate + thymine. It catalyses the reaction uridine + phosphate = alpha-D-ribose 1-phosphate + uracil. It carries out the reaction xanthosine + phosphate = alpha-D-ribose 1-phosphate + xanthine. Functionally, catalyzes the phosphorolysis of diverse nucleosides, yielding D-ribose 1-phosphate and the respective free bases. Can use uridine, adenosine, guanosine, cytidine, thymidine, inosine and xanthosine as substrates. Also catalyzes the reverse reactions. The polypeptide is Pyrimidine/purine nucleoside phosphorylase (Pseudomonas entomophila (strain L48)).